A 232-amino-acid polypeptide reads, in one-letter code: MDRVAKAREIIEKAKAENRPLVEPEAKEILKLYGIPVPEFKVARNEEEAVKFSGEIGYPVVMKIVSPQIIHKSDAGGVKINIKNDEEAREAFRTIMQNARNYKPDADLWGVIIYRMLPLGREVIVGMIRDPQFGPAVMFGLGGIFVEILKDVSFRVAPITKEDALEMIREIKAYPILAGARGEKPVNIEALADIIVKVGELALELPEIKEIDINPIFAYEDSAIAVDARMIL.

The region spanning 27–63 is the ATP-grasp domain; that stretch reads KEILKLYGIPVPEFKVARNEEEAVKFSGEIGYPVVMK. 53–64 contributes to the ATP binding site; that stretch reads SGEIGYPVVMKI.

Belongs to the acetate CoA ligase beta subunit family. As to quaternary structure, heterotetramer of two alpha and two beta subunits.

It localises to the cytoplasm. The enzyme catalyses acetate + ATP + CoA = acetyl-CoA + ADP + phosphate. Its activity is regulated as follows. Activity is dependent on magnesium. Its function is as follows. Catalyzes the reversible formation of acetate and ATP from acetyl-CoA by using ADP and phosphate. Can use other substrates such as isobutyryl-CoA, propionyl-CoA and butyryl-CoA, but not indoleacetyl-CoA, phenylacetyl-CoA or succinyl-CoA. Seems to be involved primarily in the conversion of acetyl-CoA to acetate. Participates in the degradation of branched-chain amino acids via branched-chain-acyl-CoA esters. The protein is Acetate--CoA ligase [ADP-forming] I subunit beta of Pyrococcus furiosus (strain ATCC 43587 / DSM 3638 / JCM 8422 / Vc1).